The primary structure comprises 573 residues: Lauric acid 10-hydroxylase (573 aa).

The next 2 membrane-spanning stretches (helical) occupy residues 3-23 and 298-318; these read YVNI…LMSL and LFPT…LLIF. Cys-516 provides a ligand contact to heme.

Belongs to the cytochrome P450 family. The cofactor is heme. In terms of tissue distribution, mostly expressed in flowers and leaves and, at low levels, in roots and stems.

It localises to the endoplasmic reticulum membrane. It carries out the reaction an omega-methyl-medium-chain fatty acid + reduced [NADPH--hemoprotein reductase] + O2 = an omega-hydroxy-medium-chain fatty acid + oxidized [NADPH--hemoprotein reductase] + H2O + H(+). The catalysed reaction is decanoate + reduced [NADPH--hemoprotein reductase] + O2 = 10-hydroxydecanoate + oxidized [NADPH--hemoprotein reductase] + H2O + H(+). The enzyme catalyses dodecanoate + reduced [NADPH--hemoprotein reductase] + O2 = 12-hydroxydodecanoate + oxidized [NADPH--hemoprotein reductase] + H2O + H(+). It functions in the pathway lipid metabolism; fatty acid metabolism. In terms of biological role, cytochrome P450 hydroxylase catalyzing the conversion of decanoate (capric acid) and dodecanoate (lauric acid) to their corresponding omega-hydroxy metabolites, 10-hydroxydecanoate and 12-hydroxydodecanoate, respectively; these hydroxylated components affect plant growth, including reducing root elongation. In Petunia hybrida (Petunia), this protein is Lauric acid 10-hydroxylase.